The primary structure comprises 383 residues: S-adenosylmethionine synthase 1 (383 aa).

Histidine 15 is an ATP binding site. Position 17 (aspartate 17) interacts with Mg(2+). Glutamate 43 contacts K(+). L-methionine-binding residues include glutamate 56 and glutamine 99. A flexible loop region spans residues 99–109; it reads QSPDINLGVSR. Residues 162–164, 228–229, aspartate 237, 243–244, alanine 260, and lysine 264 contribute to the ATP site; these read DGK, RF, and RK. Aspartate 237 provides a ligand contact to L-methionine. Lysine 268 serves as a coordination point for L-methionine.

It belongs to the AdoMet synthase family. Homotetramer; dimer of dimers. Requires Mg(2+) as cofactor. K(+) is required as a cofactor.

It localises to the cytoplasm. The enzyme catalyses L-methionine + ATP + H2O = S-adenosyl-L-methionine + phosphate + diphosphate. It participates in amino-acid biosynthesis; S-adenosyl-L-methionine biosynthesis; S-adenosyl-L-methionine from L-methionine: step 1/1. In terms of biological role, catalyzes the formation of S-adenosylmethionine (AdoMet) from methionine and ATP. The overall synthetic reaction is composed of two sequential steps, AdoMet formation and the subsequent tripolyphosphate hydrolysis which occurs prior to release of AdoMet from the enzyme. The sequence is that of S-adenosylmethionine synthase 1 from Rhodopseudomonas palustris (strain BisB18).